A 513-amino-acid polypeptide reads, in one-letter code: RNA-binding protein FUS (513 aa).

Residues 1-14 (MASNDYTQQATQSY) show a composition bias toward polar residues. The disordered stretch occupies residues 1–273 (MASNDYTQQA…SEQDNSDNNT (273 aa)). Composition is skewed to low complexity over residues 20–36 (QPGQ…YGQQ), 43–63 (QSTD…GQTQ), and 84–124 (SSQS…SGYG). Residues 125 to 139 (QPQGGGYGQQSGYGG) show a composition bias toward gly residues. A compositionally biased stretch (low complexity) spans 140–164 (QQQSYGQQQSYNPPQGYGQQSQYNS). Composition is skewed to gly residues over residues 165-176 (SGGGGGGGGGSY) and 185-219 (SGGG…GGGY). An asymmetric dimethylarginine; alternate mark is found at arginine 211 and arginine 213. An omega-N-methylarginine; alternate mark is found at arginine 211 and arginine 213. Residues arginine 229, arginine 231, arginine 235, arginine 238, and arginine 246 each carry the asymmetric dimethylarginine modification. Gly residues predominate over residues 231–246 (RGGGRGGRGGMGGSDR). Serine 264 carries the post-translational modification Phosphoserine. Residues 272–358 (NTIFVQGLGE…NPIKVSFATR (87 aa)) form the RRM domain. Position 273 is a phosphothreonine (threonine 273). Residue lysine 321 forms a Glycyl lysine isopeptide (Lys-Gly) (interchain with G-Cter in SUMO2) linkage. Phosphoserine is present on serine 327. Disordered regions lie at residues 362 to 411 (FNRG…QRAG) and 431 to 513 (CNQC…ERPY). An asymmetric dimethylarginine mark is found at arginine 364, arginine 370, arginine 373, arginine 375, and arginine 381. Positions 364-408 (RGGGNGRGGRGRGGPMGRGGYGGGGSGGGGRGGFPSGGGGGGGQQ) are enriched in gly residues. Arginine 394 carries the asymmetric dimethylarginine; alternate modification. Position 394 is an omega-N-methylarginine; alternate (arginine 394). The RanBP2-type zinc finger occupies 409-440 (RAGDWKCPNPTCENMNFSWRNECNQCKAPKPD). Positions 441–455 (GPGGGPGGSHMGGNY) are enriched in gly residues. Basic and acidic residues predominate over residues 456–480 (GDDRRGGRGGYDRGGYRGRGGDRGG). Asymmetric dimethylarginine occurs at positions 460, 463, 468, 472, 474, 478, 482, and 485. Gly residues predominate over residues 481 to 495 (FRGGRGGGDRGGFGP). Residue arginine 490 is modified to Asymmetric dimethylarginine; alternate. Residue arginine 490 is modified to Omega-N-methylarginine; alternate. Positions 498-513 (MDSRGEHRQDRRERPY) are enriched in basic and acidic residues.

The protein belongs to the RRM TET family. In terms of assembly, self-oligomerizes (via N-terminal region). Oligomerization is essential for chromatin binding. Component of nuclear riboprotein complexes. Interacts with ILF3, TDRD3 and SF1. Interacts through its C-terminus with SFRS13A. Interacts with OTUB1 and SARNP. Interacts with LRSAM1. Interacts with SAFB1 in a DNA-dependent manner; this interaction tethers FUS to chromatin. Interacts with MATR3. Interacts with SNRNP70 and POLR2A; these interactions couple RNA transcription and splicing. Interacts (through its RNA-binding domain) with RALY (through its RNA-binding domain); both are components of the same RNPs. Phosphorylated in its N-terminal serine residues upon induced DNA damage. ATM and DNA-PK are able to phosphorylate FUS N-terminal region.

It is found in the nucleus. DNA/RNA-binding protein that plays a role in various cellular processes such as transcription regulation, RNA splicing, RNA transport, DNA repair and damage response. Binds to ssRNA containing the consensus sequence 5'-AGGUAA-3'. Binds to nascent pre-mRNAs and acts as a molecular mediator between RNA polymerase II and U1 small nuclear ribonucleoprotein thereby coupling transcription and splicing. Also binds its own pre-mRNA and autoregulates its expression; this autoregulation mechanism is mediated by non-sense-mediated decay. Plays a role in DNA repair mechanisms by promoting D-loop formation and homologous recombination during DNA double-strand break repair. In neuronal cells, plays crucial roles in dendritic spine formation and stability, RNA transport, mRNA stability and synaptic homeostasis. This Bos taurus (Bovine) protein is RNA-binding protein FUS (FUS).